The sequence spans 390 residues: Heparan sulfate glucosamine 3-O-sulfotransferase 3B1 (390 aa).

The tract at residues 1 to 25 (MGQRLSGGRSCLDVPGRFLPQPPPP) is disordered. The Cytoplasmic segment spans residues 1 to 32 (MGQRLSGGRSCLDVPGRFLPQPPPPPPPVRRK). Residues 33–53 (LALLFAMLCIWLYMFLYSCAG) traverse the membrane as a helical; Signal-anchor for type II membrane protein segment. Topologically, residues 54–390 (SCTAAPGLLL…QMTGRDFGWD (337 aa)) are lumenal. The segment at 79–125 (TAPNETSPKMPFRAPPANSLAAGKDKTVGAGSQEEQSPEAPDSPSPI) is disordered. N82 carries N-linked (GlcNAc...) asparagine glycosylation. 147–151 (KGGTR) is a binding site for 3'-phosphoadenylyl sulfate. Substrate contacts are provided by residues 169–175 (EPHFFDR) and 200–203 (KTPS). Residues R228 and S236 each contribute to the 3'-phosphoadenylyl sulfate site. N258 carries N-linked (GlcNAc...) asparagine glycosylation. 268–269 (WS) contacts substrate. N329 carries an N-linked (GlcNAc...) asparagine glycan. The cysteines at positions 336 and 348 are disulfide-linked. Residue 353-357 (KGRAH) coordinates 3'-phosphoadenylyl sulfate.

The protein belongs to the sulfotransferase 1 family.

The protein resides in the golgi apparatus membrane. The enzyme catalyses alpha-D-glucosaminyl-[heparan sulfate](n) + 3'-phosphoadenylyl sulfate = 3-sulfo-alpha-D-glucosaminyl-[heparan sulfate](n) + adenosine 3',5'-bisphosphate + H(+). Its function is as follows. Sulfotransferase that utilizes 3'-phospho-5'-adenylyl sulfate (PAPS) to catalyze the transfer of a sulfo group to an N-unsubstituted glucosamine linked to a 2-O-sulfo iduronic acid unit on heparan sulfate. Catalyzes the O-sulfation of glucosamine in IdoUA2S-GlcNS and also in IdoUA2S-GlcNH2. Unlike HS3ST1/3-OST-1, does not convert non-anticoagulant heparan sulfate to anticoagulant heparan sulfate. The polypeptide is Heparan sulfate glucosamine 3-O-sulfotransferase 3B1 (Hs3st3b1) (Mus musculus (Mouse)).